We begin with the raw amino-acid sequence, 155 residues long: FUN14 domain-containing protein 1 (155 aa).

The Cytoplasmic segment spans residues 1-47 (MATRNPPPQDYESDDDSYEVLDLTEYARRHQWWNRVFGHSSGPMVEK). At Ser13 the chain carries Phosphoserine; by CK2. Position 17 is a phosphoserine; by ULK1 (Ser17). A Phosphotyrosine; by SRC modification is found at Tyr18. The YXXL signature appears at 18–21 (YEVL). The chain crosses the membrane as a helical span at residues 48 to 68 (YSVATQIVMGGVTGWCAGFLF). Topologically, residues 69–74 (QKVGKL) are mitochondrial intermembrane. Residues 75-95 (AATAVGGGFLLLQIASHSGYV) traverse the membrane as a helical segment. Topologically, residues 96–133 (QIDWKRVEKDVNKAKRQIKKRANKAAPEINNLIEEATE) are cytoplasmic. Lys119 is covalently cross-linked (Glycyl lysine isopeptide (Lys-Gly) (interchain with G-Cter in ubiquitin)). Residues 134–154 (FIKQNIVISSGFVGGFLLGLA) form a helical membrane-spanning segment. Ser155 is a topological domain (mitochondrial intermembrane).

This sequence belongs to the FUN14 family. Interacts (via YXXL motif) with MAP1 LC3 family proteins MAP1LC3A, MAP1LC3B and GABARAP. Interacts with DNM1L/DPR1. Interacts with GPX4. In terms of processing, phosphorylation at Ser-13 by CK2 and at Tyr-18 by SRC inhibits activation of mitophagy. Following hypoxia, dephosphorylated at Tyr-18, leading to interaction with MAP1 LC3 family proteins and triggering mitophagy. Dephosphorylation is mediated by PGAM5. Phosphorylated by ULK1 at Ser-17 which enhances FUNDC1 binding to LC3. Post-translationally, ubiquitinated on Lys-119. Deubiquitinated by USP19; leading to hypoxia-induced DRP1 oligomerization and GTPase activity. Widely expressed.

Its subcellular location is the mitochondrion outer membrane. Functionally, integral mitochondrial outer-membrane protein that mediates the formation of mitochondria-associated endoplasmic reticulum membranes (MAMs). In turn, mediates angiogenesis and neoangiogenesis through interference with intracellular Ca(2+) communication and regulation of the vascular endothelial growth factor receptor KDR/VEGFR2 expression at both mRNA and protein levels. Also acts as an activator of hypoxia-induced mitophagy, an important mechanism for mitochondrial quality and homeostasis, by interacting with and recruiting LC3 protein family to mitochondria. Mechanistically, recruits DRP1 at ER-mitochondria contact sites leading to DRP1 oligomerization and GTPase activity to facilitate mitochondrial fission during hypoxia. Additionally, plays a role in hepatic ferroptosis by interacting directly with glutathione peroxidase/GPX4 to facilitate its recruitment into mitochondria through TOM/TIM complex where it is degraded by mitophagy. The chain is FUN14 domain-containing protein 1 (FUNDC1) from Homo sapiens (Human).